The following is a 107-amino-acid chain: Large ribosomal subunit protein uL24 (107 aa).

This sequence belongs to the universal ribosomal protein uL24 family. In terms of assembly, part of the 50S ribosomal subunit.

Its function is as follows. One of two assembly initiator proteins, it binds directly to the 5'-end of the 23S rRNA, where it nucleates assembly of the 50S subunit. Functionally, one of the proteins that surrounds the polypeptide exit tunnel on the outside of the subunit. In Neisseria meningitidis serogroup C (strain 053442), this protein is Large ribosomal subunit protein uL24.